The primary structure comprises 296 residues: Phosphoribosylaminoimidazole-succinocarboxamide synthase (296 aa).

The protein belongs to the SAICAR synthetase family.

The enzyme catalyses 5-amino-1-(5-phospho-D-ribosyl)imidazole-4-carboxylate + L-aspartate + ATP = (2S)-2-[5-amino-1-(5-phospho-beta-D-ribosyl)imidazole-4-carboxamido]succinate + ADP + phosphate + 2 H(+). Its pathway is purine metabolism; IMP biosynthesis via de novo pathway; 5-amino-1-(5-phospho-D-ribosyl)imidazole-4-carboxamide from 5-amino-1-(5-phospho-D-ribosyl)imidazole-4-carboxylate: step 1/2. In Geotalea uraniireducens (strain Rf4) (Geobacter uraniireducens), this protein is Phosphoribosylaminoimidazole-succinocarboxamide synthase.